The following is a 264-amino-acid chain: Phosphate import ATP-binding protein PstB (264 aa).

The ABC transporter domain occupies Leu-11–Pro-250. ATP is bound at residue Gly-43–Ser-50.

The protein belongs to the ABC transporter superfamily. Phosphate importer (TC 3.A.1.7) family. As to quaternary structure, the complex is composed of two ATP-binding proteins (PstB), two transmembrane proteins (PstC and PstA) and a solute-binding protein (PstS).

The protein localises to the cell inner membrane. It carries out the reaction phosphate(out) + ATP + H2O = ADP + 2 phosphate(in) + H(+). Its function is as follows. Part of the ABC transporter complex PstSACB involved in phosphate import. Responsible for energy coupling to the transport system. In Synechococcus elongatus (strain ATCC 33912 / PCC 7942 / FACHB-805) (Anacystis nidulans R2), this protein is Phosphate import ATP-binding protein PstB.